A 465-amino-acid polypeptide reads, in one-letter code: MPNSSIRSELTTERGFSGPASNFNIGHGGLNQLGGAFVNGRPLPEVVRQRIVDLAHQGVRPCDISRQLRVSHGCVSKILGRYYETGSIRPGVIGGSKPKVATPKVVEKIGDYKRQNPTMFAWEIRDRLLTDGVCDNDTVPSVSSINRIIRTKVQQLFNLPMESCVKSLSPGQTLIPSSTVTPPESPHSDSLGSTYSISGLLGITQPSADGKRKLDDSDQESCRLSIDSQGSVGISRKQLRTEAYGHHPLDALECHFQRQHFPESYSSSTHSKTEQALYTLPLLNISLDDGKSSLTSTNTTIGRNLSTHQGYSALSEFTAFSIKQEASDSSSASSTPSSLCSPTFLDLQPINSGCSAPSFSAFSHPSVYGQFTSHVASGRDVVGATLPGYPPHIPSGQGNYASSAIAGMVAAGGDYSANAYSHGAYAAYGDSWRFPSSSLLGSPYYYSSGTRTAPPPTTAGAYDLM.

The segment at residues 26–152 (GHGGLNQLGG…SSINRIIRTK (127 aa)) is a DNA-binding region (paired). Residues 29-85 (GLNQLGGAFVNGRPLPEVVRQRIVDLAHQGVRPCDISRQLRVSHGCVSKILGRYYET) form a PAI subdomain region. The tract at residues 104 to 152 (KVVEKIGDYKRQNPTMFAWEIRDRLLTDGVCDNDTVPSVSSINRIIRTK) is RED subdomain. The tract at residues 206–227 (PSADGKRKLDDSDQESCRLSID) is disordered.

In terms of tissue distribution, expression starts at late gastrula stages in cells fated to become the primordia of the otic system and the pronephric kidney. Expression is maintained in these two structures through late tailbud stages. Does not appear to be expressed in the thyroid gland.

The protein localises to the nucleus. Its function is as follows. Probable transcription factor. Involved in kidney development, acting synergistically with lhx1/lim-1 to establish the pronephric primordium in late gastrulae/early neurulae. The polypeptide is Paired box protein Pax-8 (Xenopus laevis (African clawed frog)).